Consider the following 288-residue polypeptide: L-xylulose reductase (288 aa).

NADP(+) contacts are provided by Ile39, Asn113, and Lys147. Catalysis depends on Ser181, which acts as the Proton donor. NADP(+)-binding residues include Tyr196, Lys200, Ile228, and Thr230. Catalysis depends on Tyr196, which acts as the Proton acceptor. Lys200 serves as the catalytic Lowers pKa of active site Tyr.

Belongs to the short-chain dehydrogenases/reductases (SDR) family.

The enzyme catalyses xylitol + NADP(+) = L-xylulose + NADPH + H(+). Its pathway is carbohydrate degradation; L-arabinose degradation via L-arabinitol; D-xylulose 5-phosphate from L-arabinose (fungal route): step 3/5. Its function is as follows. L-xylulose reductase involved in the catabolism of L-arabinose through an oxidoreductive pathway. Catalyzes the NADPH-dependent reduction of L-xylulose. Is also able to convert D-xylulose, D-ribulose, L-sorbose, and D-fructose to their corresponding polyols. This Hypocrea jecorina (strain QM6a) (Trichoderma reesei) protein is L-xylulose reductase.